A 540-amino-acid chain; its full sequence is Chaperonin GroEL (540 aa).

Residues 29-32, 86-90, G413, 476-478, and D492 contribute to the ATP site; these read TLGP, DGTTT, and NAA.

Belongs to the chaperonin (HSP60) family. In terms of assembly, forms a cylinder of 14 subunits composed of two heptameric rings stacked back-to-back. Interacts with the co-chaperonin GroES.

The protein localises to the cytoplasm. The catalysed reaction is ATP + H2O + a folded polypeptide = ADP + phosphate + an unfolded polypeptide.. In terms of biological role, together with its co-chaperonin GroES, plays an essential role in assisting protein folding. The GroEL-GroES system forms a nano-cage that allows encapsulation of the non-native substrate proteins and provides a physical environment optimized to promote and accelerate protein folding. The polypeptide is Chaperonin GroEL (Streptococcus anginosus).